Consider the following 178-residue polypeptide: Large ribosomal subunit protein uL10 (178 aa).

The protein belongs to the universal ribosomal protein uL10 family. In terms of assembly, part of the ribosomal stalk of the 50S ribosomal subunit. The N-terminus interacts with L11 and the large rRNA to form the base of the stalk. The C-terminus forms an elongated spine to which L12 dimers bind in a sequential fashion forming a multimeric L10(L12)X complex.

Functionally, forms part of the ribosomal stalk, playing a central role in the interaction of the ribosome with GTP-bound translation factors. This chain is Large ribosomal subunit protein uL10, found in Stenotrophomonas maltophilia (strain R551-3).